The primary structure comprises 379 residues: Chaperone protein DnaJ (379 aa).

One can recognise a J domain in the interval Asp5–Gly70. The CR-type zinc-finger motif lies at Gly134–Ser212. Zn(2+) is bound by residues Cys147, Cys150, Cys164, Cys167, Cys186, Cys189, Cys200, and Cys203. CXXCXGXG motif repeat units lie at residues Cys147–Gly154, Cys164–Gly171, Cys186–Gly193, and Cys200–Gly207.

The protein belongs to the DnaJ family. As to quaternary structure, homodimer. It depends on Zn(2+) as a cofactor.

The protein resides in the cytoplasm. Participates actively in the response to hyperosmotic and heat shock by preventing the aggregation of stress-denatured proteins and by disaggregating proteins, also in an autonomous, DnaK-independent fashion. Unfolded proteins bind initially to DnaJ; upon interaction with the DnaJ-bound protein, DnaK hydrolyzes its bound ATP, resulting in the formation of a stable complex. GrpE releases ADP from DnaK; ATP binding to DnaK triggers the release of the substrate protein, thus completing the reaction cycle. Several rounds of ATP-dependent interactions between DnaJ, DnaK and GrpE are required for fully efficient folding. Also involved, together with DnaK and GrpE, in the DNA replication of plasmids through activation of initiation proteins. The chain is Chaperone protein DnaJ from Yersinia pestis bv. Antiqua (strain Antiqua).